We begin with the raw amino-acid sequence, 253 residues long: Imidazole glycerol phosphate synthase subunit HisF (253 aa).

Active-site residues include D11 and D130.

This sequence belongs to the HisA/HisF family. In terms of assembly, heterodimer of HisH and HisF.

It localises to the cytoplasm. It carries out the reaction 5-[(5-phospho-1-deoxy-D-ribulos-1-ylimino)methylamino]-1-(5-phospho-beta-D-ribosyl)imidazole-4-carboxamide + L-glutamine = D-erythro-1-(imidazol-4-yl)glycerol 3-phosphate + 5-amino-1-(5-phospho-beta-D-ribosyl)imidazole-4-carboxamide + L-glutamate + H(+). The protein operates within amino-acid biosynthesis; L-histidine biosynthesis; L-histidine from 5-phospho-alpha-D-ribose 1-diphosphate: step 5/9. IGPS catalyzes the conversion of PRFAR and glutamine to IGP, AICAR and glutamate. The HisF subunit catalyzes the cyclization activity that produces IGP and AICAR from PRFAR using the ammonia provided by the HisH subunit. In Clostridium botulinum (strain Okra / Type B1), this protein is Imidazole glycerol phosphate synthase subunit HisF.